Reading from the N-terminus, the 400-residue chain is Phosphoglycerate kinase (400 aa).

Substrate is bound by residues 21–23 (DFN), Arg37, 60–63 (HLGR), Arg121, and Arg154. Residues Lys204, Glu326, and 355 to 358 (GGDS) contribute to the ATP site.

It belongs to the phosphoglycerate kinase family. In terms of assembly, monomer.

The protein resides in the cytoplasm. It catalyses the reaction (2R)-3-phosphoglycerate + ATP = (2R)-3-phospho-glyceroyl phosphate + ADP. The protein operates within carbohydrate degradation; glycolysis; pyruvate from D-glyceraldehyde 3-phosphate: step 2/5. In Chloroflexus aurantiacus (strain ATCC 29366 / DSM 635 / J-10-fl), this protein is Phosphoglycerate kinase.